A 581-amino-acid polypeptide reads, in one-letter code: Arginine--tRNA ligase (581 aa).

Positions 126 to 136 (PNLAKEMHVGH) match the 'HIGH' region motif.

It belongs to the class-I aminoacyl-tRNA synthetase family. In terms of assembly, monomer.

Its subcellular location is the cytoplasm. It catalyses the reaction tRNA(Arg) + L-arginine + ATP = L-arginyl-tRNA(Arg) + AMP + diphosphate. The protein is Arginine--tRNA ligase of Shewanella sp. (strain ANA-3).